A 337-amino-acid chain; its full sequence is Glyceraldehyde-3-phosphate dehydrogenase 2 (337 aa).

NADP(+)-binding positions include 11-12, Asp-35, Arg-80, and Thr-122; that span reads RI. Residues 153–155, Thr-184, Arg-199, 212–213, and Arg-235 each bind D-glyceraldehyde 3-phosphate; these read SCT and TG. The Nucleophile role is filled by Cys-154. Asn-317 is an NADP(+) binding site.

Belongs to the glyceraldehyde-3-phosphate dehydrogenase family. Homotetramer.

It localises to the cytoplasm. It catalyses the reaction D-glyceraldehyde 3-phosphate + phosphate + NADP(+) = (2R)-3-phospho-glyceroyl phosphate + NADPH + H(+). The catalysed reaction is D-glyceraldehyde 3-phosphate + phosphate + NAD(+) = (2R)-3-phospho-glyceroyl phosphate + NADH + H(+). The protein operates within carbohydrate biosynthesis; Calvin cycle. In terms of biological role, gap2 has a major role in carbon fixation as a component of the Calvin cycle. Catalyzes the oxidative phosphorylation of glyceraldehyde 3-phosphate (G3P) to 1,3-bisphosphoglycerate (BPG) using the cofactor NAD. The first reaction step involves the formation of a hemiacetal intermediate between G3P and a cysteine residue, and this hemiacetal intermediate is then oxidized to a thioester, with concomitant reduction of NAD to NADH. The reduced NADH is then exchanged with the second NAD, and the thioester is attacked by a nucleophilic inorganic phosphate to produce BPG. The chain is Glyceraldehyde-3-phosphate dehydrogenase 2 (gap2) from Trichormus variabilis (strain ATCC 29413 / PCC 7937) (Anabaena variabilis).